Consider the following 168-residue polypeptide: Nascent polypeptide-associated complex subunit alpha (168 aa).

The NAC-A/B domain occupies 14 to 78 (SKNEKKAREL…PKVDDFTRRL (65 aa)). The interval 83 to 129 (QQAASAAKDPQSIQADMAAAAAAPAAPAAPAAAPEEDEAGQVDESGL) is disordered. The span at 100–115 (AAAAAAPAAPAAPAAA) shows a compositional bias: low complexity. Positions 129 to 168 (LDGQDIELVMQQANVSRNKAVKALREHNSDIVNAIMSLSK) constitute a UBA domain.

The protein belongs to the NAC-alpha family. In terms of assembly, part of the nascent polypeptide-associated complex (NAC), consisting of EGD2 and EGD1. NAC associates with ribosomes via EGD1.

It is found in the cytoplasm. The protein localises to the nucleus. Functionally, component of the nascent polypeptide-associated complex (NAC), a dynamic component of the ribosomal exit tunnel, protecting the emerging polypeptides from interaction with other cytoplasmic proteins to ensure appropriate nascent protein targeting. The NAC complex also promotes mitochondrial protein import by enhancing productive ribosome interactions with the outer mitochondrial membrane and blocks the inappropriate interaction of ribosomes translating non-secretory nascent polypeptides with translocation sites in the membrane of the endoplasmic reticulum. EGD2 may also be involved in transcription regulation. In Eremothecium gossypii (strain ATCC 10895 / CBS 109.51 / FGSC 9923 / NRRL Y-1056) (Yeast), this protein is Nascent polypeptide-associated complex subunit alpha (EGD2).